The chain runs to 259 residues: Tryptophan synthase alpha chain (259 aa).

Catalysis depends on proton acceptor residues Glu-42 and Asp-53.

This sequence belongs to the TrpA family. In terms of assembly, tetramer of two alpha and two beta chains.

The catalysed reaction is (1S,2R)-1-C-(indol-3-yl)glycerol 3-phosphate + L-serine = D-glyceraldehyde 3-phosphate + L-tryptophan + H2O. It participates in amino-acid biosynthesis; L-tryptophan biosynthesis; L-tryptophan from chorismate: step 5/5. Its function is as follows. The alpha subunit is responsible for the aldol cleavage of indoleglycerol phosphate to indole and glyceraldehyde 3-phosphate. This is Tryptophan synthase alpha chain from Erythrobacter litoralis (strain HTCC2594).